The primary structure comprises 180 residues: Large ribosomal subunit protein uL5 (180 aa).

Belongs to the universal ribosomal protein uL5 family. In terms of assembly, part of the 50S ribosomal subunit; part of the 5S rRNA/L5/L18/L25 subcomplex. Contacts the 5S rRNA and the P site tRNA. Forms a bridge to the 30S subunit in the 70S ribosome.

In terms of biological role, this is one of the proteins that bind and probably mediate the attachment of the 5S RNA into the large ribosomal subunit, where it forms part of the central protuberance. In the 70S ribosome it contacts protein S13 of the 30S subunit (bridge B1b), connecting the 2 subunits; this bridge is implicated in subunit movement. Contacts the P site tRNA; the 5S rRNA and some of its associated proteins might help stabilize positioning of ribosome-bound tRNAs. The protein is Large ribosomal subunit protein uL5 of Ralstonia nicotianae (strain ATCC BAA-1114 / GMI1000) (Ralstonia solanacearum).